A 382-amino-acid chain; its full sequence is Galactokinase (382 aa).

Residue 34 to 37 (EHTD) coordinates substrate. Residue 124 to 130 (GAGLSSS) coordinates ATP. Mg(2+)-binding residues include serine 130 and glutamate 162. The active-site Proton acceptor is the aspartate 174. Tyrosine 223 contributes to the substrate binding site.

Belongs to the GHMP kinase family. GalK subfamily.

Its subcellular location is the cytoplasm. It carries out the reaction alpha-D-galactose + ATP = alpha-D-galactose 1-phosphate + ADP + H(+). The protein operates within carbohydrate metabolism; galactose metabolism. In terms of biological role, catalyzes the transfer of the gamma-phosphate of ATP to D-galactose to form alpha-D-galactose-1-phosphate (Gal-1-P). The protein is Galactokinase of Escherichia coli O1:K1 / APEC.